The chain runs to 239 residues: mRNA turnover protein 4 homolog (239 aa).

Residues 216 to 239 (QQMDDDLPESAPESEGESEEEDDS) form a disordered region. Residues 218-239 (MDDDLPESAPESEGESEEEDDS) are compositionally biased toward acidic residues. Phosphoserine occurs at positions 225, 229, and 233.

It belongs to the universal ribosomal protein uL10 family. Associates with the pre-60S ribosomal particle. Interacts with MINAS-60 (product of an alternative open reading frame of RBM10).

It localises to the nucleus. The protein localises to the nucleolus. It is found in the cytoplasm. In terms of biological role, component of the ribosome assembly machinery. Nuclear paralog of the ribosomal protein P0, it binds pre-60S subunits at an early stage of assembly in the nucleolus, and is replaced by P0 in cytoplasmic pre-60S subunits and mature 80S ribosomes. The polypeptide is mRNA turnover protein 4 homolog (Mrto4) (Mus musculus (Mouse)).